The sequence spans 68 residues: Cell division protein ZapB (68 aa).

The stretch at 3 to 58 (LELLSKLETKIQAALETIELLKMELEEEKQKNHTLNEQNQQLSQDLTSWNEKVTGL) forms a coiled coil.

It belongs to the ZapB family. In terms of assembly, homodimer. The ends of the coiled-coil dimer bind to each other, forming polymers. Interacts with FtsZ.

It localises to the cytoplasm. Functionally, non-essential, abundant cell division factor that is required for proper Z-ring formation. It is recruited early to the divisome by direct interaction with FtsZ, stimulating Z-ring assembly and thereby promoting cell division earlier in the cell cycle. Its recruitment to the Z-ring requires functional FtsA or ZipA. This chain is Cell division protein ZapB, found in Shewanella loihica (strain ATCC BAA-1088 / PV-4).